Here is a 216-residue protein sequence, read N- to C-terminus: MOB kinase activator 3C (216 aa).

The Zn(2+) site is built by Cys-82, Cys-87, His-164, and His-169.

This sequence belongs to the MOB1/phocein family.

May regulate the activity of kinases. This Mus musculus (Mouse) protein is MOB kinase activator 3C (Mob3c).